Reading from the N-terminus, the 260-residue chain is 5'-nucleotidase SurE (260 aa).

A divalent metal cation-binding residues include D8, D9, S39, and N93.

The protein belongs to the SurE nucleotidase family. Requires a divalent metal cation as cofactor.

It localises to the cytoplasm. It carries out the reaction a ribonucleoside 5'-phosphate + H2O = a ribonucleoside + phosphate. In terms of biological role, nucleotidase that shows phosphatase activity on nucleoside 5'-monophosphates. The polypeptide is 5'-nucleotidase SurE (Thermofilum pendens (strain DSM 2475 / Hrk 5)).